The primary structure comprises 88 residues: MAHKKGQGSTQNNRDSAGRRLGVKKFGSEFVRAGNIIVRQRGTKIHPGNNVGMGKDHTLYALIDGVVKFEHKDRSRKKVSVISGNFGE.

The interval 1–21 (MAHKKGQGSTQNNRDSAGRRL) is disordered.

It belongs to the bacterial ribosomal protein bL27 family.

The chain is Large ribosomal subunit protein bL27 from Helicobacter pylori (strain J99 / ATCC 700824) (Campylobacter pylori J99).